Here is a 107-residue protein sequence, read N- to C-terminus: Small ribosomal subunit protein uS10 (107 aa).

The protein belongs to the universal ribosomal protein uS10 family. As to quaternary structure, part of the 30S ribosomal subunit.

In terms of biological role, involved in the binding of tRNA to the ribosomes. The protein is Small ribosomal subunit protein uS10 of Deinococcus geothermalis (strain DSM 11300 / CIP 105573 / AG-3a).